A 629-amino-acid polypeptide reads, in one-letter code: tRNA uridine 5-carboxymethylaminomethyl modification enzyme MnmG (629 aa).

FAD-binding positions include 13 to 18 (GGGHAG), V125, and S180. 273 to 287 (GPRYCPSIEDKVMRF) provides a ligand contact to NAD(+). Position 370 (Q370) interacts with FAD.

This sequence belongs to the MnmG family. Homodimer. Heterotetramer of two MnmE and two MnmG subunits. The cofactor is FAD.

The protein localises to the cytoplasm. In terms of biological role, NAD-binding protein involved in the addition of a carboxymethylaminomethyl (cmnm) group at the wobble position (U34) of certain tRNAs, forming tRNA-cmnm(5)s(2)U34. This is tRNA uridine 5-carboxymethylaminomethyl modification enzyme MnmG from Serratia proteamaculans (strain 568).